The following is a 232-amino-acid chain: TIR domain-containing adapter molecule 2 (232 aa).

Residues 1-10 (MGIGKSKMDP) are compositionally biased toward basic and acidic residues. A disordered region spans residues 1–71 (MGIGKSKMDP…VEERPEEDTE (71 aa)). Gly2 carries N-myristoyl glycine lipidation. Residues 19–29 (KSQSVDTSQSH) are compositionally biased toward polar residues. Residues 30 to 42 (HMSDSKQSEEISL) are compositionally biased toward basic and acidic residues. A compositionally biased stretch (acidic residues) spans 55–71 (PAEEQEGVEERPEEDTE). One can recognise a TIR domain in the interval 70–226 (TEEEVFLKFV…AIWKETRNTV (157 aa)). Tyr164 is subject to Phosphotyrosine.

Homodimer. Interacts with TLR4, TICAM1, IRF3 and IRF7 in response to LPS. Interacts with IL1R1, IL1RAP, IRAK2, IRAK3 and TRAF6. Interacts with protein kinase-inactive mutants of IRAK1 and IRAK4. Isoform 1 interacts with isoform 2; the interaction occurs in late endosomes and disrupts the interaction between isoform 1 and TICAM1. Interacts with MYD88; the interaction decreases after IL-18 stimulation in a time-dependent manner. Interacts with IL18R1 and IL18RAP. Interacts with TLR2. Interacts with RAB11FIP2. Post-translationally, myristoylated. Required for membrane association which is critical for its ability to initiate efficient signaling. In terms of processing, phosphorylated by PRKCE in response to LPS. Phosphorylation is essential for its function. It is depleted from the membrane upon phosphorylation. Tyrosine phosphorylation is inhibited by phosphatase PTPN4.

Its subcellular location is the cytoplasm. It is found in the golgi apparatus. The protein localises to the cell membrane. The protein resides in the endoplasmic reticulum. It localises to the early endosome. Its subcellular location is the late endosome. It is found in the cell projection. The protein localises to the phagocytic cup. Functions as a sorting adapter in different signaling pathways to facilitate downstream signaling leading to type I interferon induction. In TLR4 signaling, physically bridges TLR4 and TICAM1 and functionally transmits signal to TICAM1 in early endosomes after endocytosis of TLR4. In TLR2 signaling, physically bridges TLR2 and MYD88 and is required for the TLR2-dependent movement of MYD88 to endosomes following ligand engagement. Involved in IL-18 signaling and is proposed to function as a sorting adapter for MYD88 in IL-18 signaling during adaptive immune response. Forms a complex with RAB11FIP2 that is recruited to the phagosomes to promote the activation of the actin-regulatory GTPases RAC1 and CDC42 and subsequent phagocytosis of Gram-negative bacteria. This is TIR domain-containing adapter molecule 2 (TICAM2) from Bos taurus (Bovine).